The chain runs to 142 residues: Struthiocalcin-2 (142 aa).

3 disulfide bridges follow: C6–C17, C34–C138, and C113–C130. Residues F13–E139 form the C-type lectin domain. A phosphoserine mark is found at S62, S66, and S68.

It localises to the secreted. The protein localises to the extracellular space. It is found in the extracellular matrix. The sequence is that of Struthiocalcin-2 from Struthio camelus (Common ostrich).